We begin with the raw amino-acid sequence, 219 residues long: tRNA (guanine-N(7)-)-methyltransferase (219 aa).

S-adenosyl-L-methionine contacts are provided by E46, E71, N100, and D122. D122 is an active-site residue. Substrate is bound by residues K126, D158, and 199–202; that span reads TEYE.

This sequence belongs to the class I-like SAM-binding methyltransferase superfamily. TrmB family.

It carries out the reaction guanosine(46) in tRNA + S-adenosyl-L-methionine = N(7)-methylguanosine(46) in tRNA + S-adenosyl-L-homocysteine. The protein operates within tRNA modification; N(7)-methylguanine-tRNA biosynthesis. Functionally, catalyzes the formation of N(7)-methylguanine at position 46 (m7G46) in tRNA. The polypeptide is tRNA (guanine-N(7)-)-methyltransferase (Leuconostoc mesenteroides subsp. mesenteroides (strain ATCC 8293 / DSM 20343 / BCRC 11652 / CCM 1803 / JCM 6124 / NCDO 523 / NBRC 100496 / NCIMB 8023 / NCTC 12954 / NRRL B-1118 / 37Y)).